The chain runs to 1175 residues: 1-phosphatidylinositol 4,5-bisphosphate phosphodiesterase beta-4 (1175 aa).

Alanine 2 bears the N-acetylalanine mark. The PI-PLC X-box domain maps to 313–463 (QEMDHPLAHY…LKRKILIKNK (151 aa)). Active-site residues include histidine 328 and histidine 375. The tract at residues 487-512 (AAPASILEDDNEEEIESADQEEEAHP) is disordered. The segment covering 493 to 508 (LEDDNEEEIESADQEE) has biased composition (acidic residues). One can recognise a PI-PLC Y-box domain in the interval 565 to 681 (LSTMINYAQP…GYLLKPDFMR (117 aa)). Residues 684-809 (DRTFDPFSET…SLRNEGNKPL (126 aa)) form the C2 domain. 2 disordered regions span residues 860–904 (SDIA…LGSG) and 1082–1110 (KISM…VREL). Polar residues-rich tracts occupy residues 885–900 (VTPQ…TTAA) and 1085–1094 (MENSKAISQD). Threonine 886 is modified (phosphothreonine). Basic and acidic residues predominate over residues 1095 to 1109 (KSIKNKAERERRVRE).

Requires Ca(2+) as cofactor. Preferentially expressed in the retina.

It localises to the cell membrane. It carries out the reaction a 1,2-diacyl-sn-glycero-3-phospho-(1D-myo-inositol-4,5-bisphosphate) + H2O = 1D-myo-inositol 1,4,5-trisphosphate + a 1,2-diacyl-sn-glycerol + H(+). It catalyses the reaction a 1,2-diacyl-sn-glycero-3-phospho-(1D-myo-inositol) + H2O = 1D-myo-inositol 1-phosphate + a 1,2-diacyl-sn-glycerol + H(+). Its function is as follows. Activated phosphatidylinositol-specific phospholipase C enzymes catalyze the production of the second messenger molecules diacylglycerol (DAG) and inositol 1,4,5-trisphosphate (IP3) involved in G-protein coupled receptor signaling pathways. PLCB4 is a direct effector of the endothelin receptor signaling pathway that plays an essential role in lower jaw and middle ear structures development. This Rattus norvegicus (Rat) protein is 1-phosphatidylinositol 4,5-bisphosphate phosphodiesterase beta-4.